Reading from the N-terminus, the 285-residue chain is 2-dehydro-3-deoxyphosphooctonate aldolase (285 aa).

The protein belongs to the KdsA family.

It is found in the cytoplasm. It carries out the reaction D-arabinose 5-phosphate + phosphoenolpyruvate + H2O = 3-deoxy-alpha-D-manno-2-octulosonate-8-phosphate + phosphate. The protein operates within carbohydrate biosynthesis; 3-deoxy-D-manno-octulosonate biosynthesis; 3-deoxy-D-manno-octulosonate from D-ribulose 5-phosphate: step 2/3. It participates in bacterial outer membrane biogenesis; lipopolysaccharide biosynthesis. This chain is 2-dehydro-3-deoxyphosphooctonate aldolase, found in Methylibium petroleiphilum (strain ATCC BAA-1232 / LMG 22953 / PM1).